We begin with the raw amino-acid sequence, 361 residues long: MMDSPKKLGYHMPAEYEPHHGTLMIWPTRPGSWPFQGKAAKRAFTQIIETIAEGERVYLLVEQAYLSEAQSYLGDKVVYLDIPTNDAWARDTGPTILVNDKGKKLAVDWAFNAWGGTYDGLYQDYEEDDQVASRFAEALERPVYDAKPFVLEGGAIHSDGQGTILVTESCLLSPGRNPNLTKEEIENTLLESLGAEKVIWLPYGIYQDETNEHVDNVVAFVGPAEVVLAWTDDENDPQYAMSKADLELLEQETDAKGCHFTIHKLPIPAVRQVVTEEDLPGYIYEEGEEERYAGERLAASYVNFYIANKAVLVPQFEDVNDQVALDILSKCFPDRKVVGIPARDILLGGGNIHCITQQIPE.

C354 acts as the Amidino-cysteine intermediate in catalysis.

This sequence belongs to the agmatine deiminase family.

It carries out the reaction agmatine + H2O = N-carbamoylputrescine + NH4(+). The chain is Putative agmatine deiminase from Streptococcus pneumoniae (strain ATCC 700669 / Spain 23F-1).